The chain runs to 127 residues: Major sperm protein 10/36/56/76 (127 aa).

N-acetylalanine is present on Ala-2. Residues Asp-9 to Asn-126 enclose the MSP domain.

As to expression, sperm.

The protein resides in the cell projection. The protein localises to the pseudopodium. Its subcellular location is the cytoplasm. It localises to the cytoskeleton. Central component in molecular interactions underlying sperm crawling. Forms an extensive filament system that extends from sperm villipoda, along the leading edge of the pseudopod. The chain is Major sperm protein 10/36/56/76 (msp-10) from Caenorhabditis elegans.